A 101-amino-acid chain; its full sequence is uncharacterized protein (101 aa).

Positions 1–23 are cleaved as a signal peptide; that stretch reads MERRTGVVLIIFVTFCEAMMARA. The helical transmembrane segment at 38–58 threads the bilayer; the sequence is FLLFIIHTSCTMVAFIIGNLA.

It is found in the host membrane. This is an uncharacterized protein from Cryphonectria parasitica (Chestnut blight fungus).